A 301-amino-acid polypeptide reads, in one-letter code: Homoserine O-acetyltransferase (301 aa).

Cys142 (acyl-thioester intermediate) is an active-site residue. Residues Lys163 and Ser192 each coordinate substrate. Residue His235 is the Proton acceptor of the active site. Residue Glu237 is part of the active site. Arg249 serves as a coordination point for substrate.

This sequence belongs to the MetA family.

The protein localises to the cytoplasm. It carries out the reaction L-homoserine + acetyl-CoA = O-acetyl-L-homoserine + CoA. The protein operates within amino-acid biosynthesis; L-methionine biosynthesis via de novo pathway; O-acetyl-L-homoserine from L-homoserine: step 1/1. Functionally, transfers an acetyl group from acetyl-CoA to L-homoserine, forming acetyl-L-homoserine. This chain is Homoserine O-acetyltransferase, found in Bacillus cereus (strain ZK / E33L).